Consider the following 1412-residue polypeptide: DNA-directed RNA polymerase subunit beta' (1412 aa).

The Zn(2+) site is built by Cys-70, Cys-72, Cys-85, and Cys-88. Asp-460, Asp-462, and Asp-464 together coordinate Mg(2+). Zn(2+) is bound by residues Cys-819, Cys-893, Cys-900, and Cys-903. Residues 1392-1412 (EEAFEFGTPSAPAEEPQHPAE) form a disordered region.

It belongs to the RNA polymerase beta' chain family. As to quaternary structure, the RNAP catalytic core consists of 2 alpha, 1 beta, 1 beta' and 1 omega subunit. When a sigma factor is associated with the core the holoenzyme is formed, which can initiate transcription. Mg(2+) serves as cofactor. The cofactor is Zn(2+).

The catalysed reaction is RNA(n) + a ribonucleoside 5'-triphosphate = RNA(n+1) + diphosphate. Functionally, DNA-dependent RNA polymerase catalyzes the transcription of DNA into RNA using the four ribonucleoside triphosphates as substrates. The sequence is that of DNA-directed RNA polymerase subunit beta' from Burkholderia mallei (strain NCTC 10247).